The following is a 211-amino-acid chain: Ribonuclease HII (211 aa).

An RNase H type-2 domain is found at 24-211 (QLIAGVDEVG…KPVKKALGLD (188 aa)). 3 residues coordinate a divalent metal cation: aspartate 30, glutamate 31, and aspartate 122.

The protein belongs to the RNase HII family. Mn(2+) is required as a cofactor. It depends on Mg(2+) as a cofactor.

The protein localises to the cytoplasm. It carries out the reaction Endonucleolytic cleavage to 5'-phosphomonoester.. Its function is as follows. Endonuclease that specifically degrades the RNA of RNA-DNA hybrids. The chain is Ribonuclease HII from Vibrio parahaemolyticus serotype O3:K6 (strain RIMD 2210633).